The sequence spans 159 residues: SsrA-binding protein (159 aa).

Residues 132–159 (KDFDKRHTEKERDSDREIQRAMRHGKDD) form a disordered region.

It belongs to the SmpB family.

The protein resides in the cytoplasm. In terms of biological role, required for rescue of stalled ribosomes mediated by trans-translation. Binds to transfer-messenger RNA (tmRNA), required for stable association of tmRNA with ribosomes. tmRNA and SmpB together mimic tRNA shape, replacing the anticodon stem-loop with SmpB. tmRNA is encoded by the ssrA gene; the 2 termini fold to resemble tRNA(Ala) and it encodes a 'tag peptide', a short internal open reading frame. During trans-translation Ala-aminoacylated tmRNA acts like a tRNA, entering the A-site of stalled ribosomes, displacing the stalled mRNA. The ribosome then switches to translate the ORF on the tmRNA; the nascent peptide is terminated with the 'tag peptide' encoded by the tmRNA and targeted for degradation. The ribosome is freed to recommence translation, which seems to be the essential function of trans-translation. The protein is SsrA-binding protein of Pseudomonas aeruginosa (strain LESB58).